Here is a 480-residue protein sequence, read N- to C-terminus: MSKRSDGSQPRTIVDKVWDAHVVRAETPDAPAILYIDLHLVHEVTSPQAFTVLRERGLKLRRPERTLATMDHSIPTLPRGADGRWPFVDAQAAAQVSQMERNCADFGVELHGLGDDAQGVVHVFGPEMGATQPGMTVVCGDSHTATHGAFGALAFGIGTSEVGHVLASQCLLQRRPRTLAVRVDGELGPGLSAKDLILAIIAKLGVGGGTGHVIEYLGPAVRALSMEGRMTLCNMSIEAGARAGLVAPDDTTFEWLAGRPRAPKGAAWDEAVARWRALPSDDGATYDRELRLDAAALEPMITFGTNPGQGIAVTGLVPDPVAERDASARATLEAALRYMGLVPGKPIAGQKVDVVFIGSCTNGRIEDMREAARVLKGRKVRTRTLVVPGSHRVKKDAEAEGIDRIVREAGAEWREPGCSMCIAMNGDNLQAGQYCVSTSNRNFEGRQGPGGRTLLASPLTAAAAAVTGAVADPRRVLEGR.

[4Fe-4S] cluster-binding residues include Cys-360, Cys-418, and Cys-421.

This sequence belongs to the aconitase/IPM isomerase family. LeuC type 1 subfamily. As to quaternary structure, heterodimer of LeuC and LeuD. The cofactor is [4Fe-4S] cluster.

The enzyme catalyses (2R,3S)-3-isopropylmalate = (2S)-2-isopropylmalate. Its pathway is amino-acid biosynthesis; L-leucine biosynthesis; L-leucine from 3-methyl-2-oxobutanoate: step 2/4. Catalyzes the isomerization between 2-isopropylmalate and 3-isopropylmalate, via the formation of 2-isopropylmaleate. This is 3-isopropylmalate dehydratase large subunit from Anaeromyxobacter dehalogenans (strain 2CP-1 / ATCC BAA-258).